The sequence spans 568 residues: Sulfite reductase [NADPH] hemoprotein beta-component (568 aa).

Residues C425, C431, C470, and C474 each coordinate [4Fe-4S] cluster. A siroheme-binding site is contributed by C474.

The protein belongs to the nitrite and sulfite reductase 4Fe-4S domain family. As to quaternary structure, alpha(8)-beta(8). The alpha component is a flavoprotein, the beta component is a hemoprotein. Requires siroheme as cofactor. [4Fe-4S] cluster is required as a cofactor.

The enzyme catalyses hydrogen sulfide + 3 NADP(+) + 3 H2O = sulfite + 3 NADPH + 4 H(+). The protein operates within sulfur metabolism; hydrogen sulfide biosynthesis; hydrogen sulfide from sulfite (NADPH route): step 1/1. Component of the sulfite reductase complex that catalyzes the 6-electron reduction of sulfite to sulfide. This is one of several activities required for the biosynthesis of L-cysteine from sulfate. This is Sulfite reductase [NADPH] hemoprotein beta-component from Xanthomonas campestris pv. campestris (strain ATCC 33913 / DSM 3586 / NCPPB 528 / LMG 568 / P 25).